Reading from the N-terminus, the 179-residue chain is Pyridoxal 5'-phosphate synthase subunit PdxT (179 aa).

48 to 50 contacts L-glutamine; that stretch reads GES. Catalysis depends on Cys79, which acts as the Nucleophile. L-glutamine-binding positions include Arg101 and 127-128; that span reads IR. Active-site charge relay system residues include His163 and Glu165.

Belongs to the glutaminase PdxT/SNO family. In terms of assembly, in the presence of PdxS, forms a dodecamer of heterodimers. Only shows activity in the heterodimer.

It catalyses the reaction aldehydo-D-ribose 5-phosphate + D-glyceraldehyde 3-phosphate + L-glutamine = pyridoxal 5'-phosphate + L-glutamate + phosphate + 3 H2O + H(+). The catalysed reaction is L-glutamine + H2O = L-glutamate + NH4(+). The protein operates within cofactor biosynthesis; pyridoxal 5'-phosphate biosynthesis. Catalyzes the hydrolysis of glutamine to glutamate and ammonia as part of the biosynthesis of pyridoxal 5'-phosphate. The resulting ammonia molecule is channeled to the active site of PdxS. In Francisella philomiragia subsp. philomiragia (strain ATCC 25017 / CCUG 19701 / FSC 153 / O#319-036), this protein is Pyridoxal 5'-phosphate synthase subunit PdxT.